Reading from the N-terminus, the 306-residue chain is Glutamyl-Q tRNA(Asp) synthetase (306 aa).

L-glutamate is bound by residues 29-33 (RFAPS) and D65. The short motif at 32 to 42 (PSPTGPLHLGN) is the 'HIGH' region element. 4 residues coordinate Zn(2+): C121, C123, Y141, and C145. L-glutamate-binding residues include Y188 and R206. The 'KMSKS' region motif lies at 244 to 248 (KLAKR). K247 contributes to the ATP binding site.

It belongs to the class-I aminoacyl-tRNA synthetase family. GluQ subfamily. Requires Zn(2+) as cofactor.

In terms of biological role, catalyzes the tRNA-independent activation of glutamate in presence of ATP and the subsequent transfer of glutamate onto a tRNA(Asp). Glutamate is transferred on the 2-amino-5-(4,5-dihydroxy-2-cyclopenten-1-yl) moiety of the queuosine in the wobble position of the QUC anticodon. This chain is Glutamyl-Q tRNA(Asp) synthetase, found in Prochlorococcus marinus (strain MIT 9313).